The chain runs to 548 residues: CTP synthase (548 aa).

The tract at residues 1-276 (MPTELTDYDP…DQYVMEQLGL (276 aa)) is amidoligase domain. CTP is bound at residue Ser25. Ser25 is a UTP binding site. 26-31 (GLGKGI) is a binding site for ATP. An L-glutamine-binding site is contributed by Tyr66. Residue Asp83 participates in ATP binding. Asp83 and Glu151 together coordinate Mg(2+). CTP-binding positions include 158–160 (DIE), 197–202 (KTKPTQ), and Lys233. UTP contacts are provided by residues 197–202 (KTKPTQ) and Lys233. The Glutamine amidotransferase type-1 domain occupies 303–541 (DIALVGKYAM…VETILETTDT (239 aa)). Gly363 provides a ligand contact to L-glutamine. Cys390 serves as the catalytic Nucleophile; for glutamine hydrolysis. L-glutamine contacts are provided by residues 391–394 (LGFQ), Glu414, and Arg471. Active-site residues include His514 and Glu516.

This sequence belongs to the CTP synthase family. As to quaternary structure, homotetramer.

The enzyme catalyses UTP + L-glutamine + ATP + H2O = CTP + L-glutamate + ADP + phosphate + 2 H(+). It carries out the reaction L-glutamine + H2O = L-glutamate + NH4(+). It catalyses the reaction UTP + NH4(+) + ATP = CTP + ADP + phosphate + 2 H(+). It participates in pyrimidine metabolism; CTP biosynthesis via de novo pathway; CTP from UDP: step 2/2. Allosterically activated by GTP, when glutamine is the substrate; GTP has no effect on the reaction when ammonia is the substrate. The allosteric effector GTP functions by stabilizing the protein conformation that binds the tetrahedral intermediate(s) formed during glutamine hydrolysis. Inhibited by the product CTP, via allosteric rather than competitive inhibition. Catalyzes the ATP-dependent amination of UTP to CTP with either L-glutamine or ammonia as the source of nitrogen. Regulates intracellular CTP levels through interactions with the four ribonucleotide triphosphates. This is CTP synthase from Natronomonas pharaonis (strain ATCC 35678 / DSM 2160 / CIP 103997 / JCM 8858 / NBRC 14720 / NCIMB 2260 / Gabara) (Halobacterium pharaonis).